A 157-amino-acid chain; its full sequence is Endoribonuclease YbeY (157 aa).

Zn(2+)-binding residues include histidine 114, histidine 118, and histidine 124.

It belongs to the endoribonuclease YbeY family. The cofactor is Zn(2+).

Its subcellular location is the cytoplasm. Its function is as follows. Single strand-specific metallo-endoribonuclease involved in late-stage 70S ribosome quality control and in maturation of the 3' terminus of the 16S rRNA. This is Endoribonuclease YbeY from Yersinia pestis.